The primary structure comprises 177 residues: uncharacterized protein (177 aa).

Residues 100–115 (QVQPHQQTHQQSQQTH) show a composition bias toward low complexity. The segment at 100–135 (QVQPHQQTHQQSQQTHNKTVANSGDPPPPPPSQPNK) is disordered. A helical membrane pass occupies residues 141–158 (WIVGMVIGVVVLYLLYRY).

The protein localises to the membrane. This is an uncharacterized protein from Aedes vexans (Inland floodwater mosquito).